The chain runs to 106 residues: UPF0060 membrane protein CHU_3331 (106 aa).

Helical transmembrane passes span Phe-5–Phe-25, Ala-31–Ile-51, Ala-59–Glu-79, and Ile-85–Pro-105.

The protein belongs to the UPF0060 family.

The protein resides in the cell inner membrane. This chain is UPF0060 membrane protein CHU_3331, found in Cytophaga hutchinsonii (strain ATCC 33406 / DSM 1761 / CIP 103989 / NBRC 15051 / NCIMB 9469 / D465).